Reading from the N-terminus, the 86-residue chain is Protein YwqI (86 aa).

A coiled-coil region spans residues 57 to 83 (DYKKAVQKNIEDTKDNVDSLKEQDEAI).

This is Protein YwqI (ywqI) from Bacillus subtilis (strain 168).